The primary structure comprises 136 residues: Histone H3.3-like type 2 (136 aa).

The tract at residues 1-20 (MARTKQTARKSTGGKAPRKA) is disordered. N6-acetyllysine; alternate occurs at positions 5 and 10. 2 positions are modified to N6-methylated lysine; alternate: Lys-5 and Lys-10. Ser-11 bears the Phosphoserine mark. N6-acetyllysine occurs at positions 15 and 24. N6-methylated lysine is present on Lys-28. Ser-29 is subject to Phosphoserine. N6-methylated lysine is present on residues Lys-37 and Lys-80.

Belongs to the histone H3 family. In terms of assembly, the nucleosome is a histone octamer containing two molecules each of H2A, H2B, H3 and H4 assembled in one H3-H4 heterotetramer and two H2A-H2B heterodimers. The octamer wraps approximately 147 bp of DNA. Acetylation is generally linked to gene activation. Post-translationally, methylation at Lys-5 is linked to gene activation. Methylation at Lys-10 is linked to gene repression.

It is found in the nucleus. It localises to the chromosome. In terms of biological role, putative variant histone H3 which may replace conventional H3 in a subset of nucleosomes. Nucleosomes wrap and compact DNA into chromatin, limiting DNA accessibility to the cellular machineries which require DNA as a template. Histones thereby play a central role in transcription regulation, DNA repair, DNA replication and chromosomal stability. DNA accessibility is regulated via a complex set of post-translational modifications of histones, also called histone code, and nucleosome remodeling. This Caenorhabditis elegans protein is Histone H3.3-like type 2 (his-74).